The primary structure comprises 126 residues: UPF0102 protein plu4003 (126 aa).

The protein belongs to the UPF0102 family.

The polypeptide is UPF0102 protein plu4003 (Photorhabdus laumondii subsp. laumondii (strain DSM 15139 / CIP 105565 / TT01) (Photorhabdus luminescens subsp. laumondii)).